A 405-amino-acid polypeptide reads, in one-letter code: Multidrug resistance protein MdtH (405 aa).

Helical transmembrane passes span 13 to 33, 34 to 54, 78 to 95, 99 to 116, 139 to 159, 165 to 185, 213 to 233, 243 to 263, 277 to 297, 299 to 319, 340 to 360, and 365 to 385; these read YFLLMDNMLVVMGFYVVFPLI, SIRFVDQLGWAALLVGIALGL, MIIAGMLMRALGFVLMGI, PWLLWLSCALSALGGTLF, LLMMQDSACSVIGALLGSWLL, LVCLAGAVLFVFAAIFNAWLL, YVLTLTGYYMLSVQVMLMLPI, AAVKWMYAIEAALSLSLLYPI, LMAGLTVMLLSLFPIGLIEDL, ALFMLIGLFYIGSIIAEPARE, LGLALGGAIGYSGGGWLYDVG, and IPQLPWFMLGLIGFITLLGLY.

This sequence belongs to the major facilitator superfamily. DHA1 family. MdtH (TC 2.A.1.2.21) subfamily.

It is found in the cell inner membrane. The sequence is that of Multidrug resistance protein MdtH from Sodalis glossinidius (strain morsitans).